The following is a 649-amino-acid chain: Glycerol-3-phosphate dehydrogenase, mitochondrial (649 aa).

69 to 97 (DVLIIGGGATGTGCALDAATRGLNVALVE) serves as a coordination point for FAD.

The protein belongs to the FAD-dependent glycerol-3-phosphate dehydrogenase family. Requires FAD as cofactor.

Its subcellular location is the mitochondrion inner membrane. The protein resides in the mitochondrion intermembrane space. The enzyme catalyses a quinone + sn-glycerol 3-phosphate = dihydroxyacetone phosphate + a quinol. The protein operates within polyol metabolism; glycerol degradation via glycerol kinase pathway; glycerone phosphate from sn-glycerol 3-phosphate (anaerobic route): step 1/1. This Saccharomyces cerevisiae (strain ATCC 204508 / S288c) (Baker's yeast) protein is Glycerol-3-phosphate dehydrogenase, mitochondrial (GUT2).